A 926-amino-acid polypeptide reads, in one-letter code: Peripheral plasma membrane protein CASK (926 aa).

A Protein kinase domain is found at 12–276 (YELCEVIGKG…VYEALNHPWL (265 aa)). ATP-binding positions include 18–26 (IGKGPFSVV) and Lys-41. Residue Ser-51 is modified to Phosphoserine. Residue Asp-141 is part of the active site. 2 positions are modified to phosphoserine; by autocatalysis: Ser-151 and Ser-155. Phosphothreonine is present on Thr-182. 2 positions are modified to phosphoserine: Lys-192 and Ser-313. The interval 305 to 315 (KGAVLAAVSSH) is calmodulin-binding. 2 L27 domains span residues 343-398 (AERA…SPQI) and 402-455 (PSDA…YSDE). The tract at residues 482–909 (MENVTRVRLV…DETIRHLEEA (428 aa)) is required for interaction with NRXN1 (via C-terminal tail). The 76-residue stretch at 489–564 (RLVQFQKNTD…MLREMRGSIT (76 aa)) folds into the PDZ domain. A phosphoserine mark is found at Tyr-571 and Ser-577. Residues 574–610 (QSSSCERDSPSTSRQSPANGHSSTNNSVSDLPSTTQP) are disordered. One can recognise an SH3 domain in the interval 612–682 (GRQIYVRAQF…PSPELQEWRV (71 aa)). The 173-residue stretch at 739–911 (RKTLVLLGAH…TIRHLEEAVE (173 aa)) folds into the Guanylate kinase-like domain.

In the N-terminal section; belongs to the protein kinase superfamily. CAMK Ser/Thr protein kinase family. CaMK subfamily. This sequence belongs to the MAGUK family. As to quaternary structure, CASK and LIN7 form two mutually exclusive tripartite complexes with APBA1 or CASKIN1. Component of the brain-specific heterotrimeric complex (LIN-10-LIN-2-LIN-7 complex) composed of at least APBA1, CASK, and LIN7, which associates with the motor protein KIF17 to transport vesicles along microtubules. Forms a heterotrimeric complex with DLG1 and LIN7B via their L27 domains. Identified in a complex with ACTN4, IQGAP1, MAGI2, NPHS1, SPTAN1 and SPTBN1. Part of a complex containing CASK, TBR1 and TSPYL2. Interacts with WHRN. Interacts (via the PDZ, SH3 and guanylate kinase-like domains) with NRXN1 (via C-terminus). Interacts with CASKIN1, APBA1, LIN7(A/B/C) and L27 domain of DLG1 and isoform 2 of DLG4. Interacts with FCHSD2. Interacts with KIRREL3. Interacts with TBR1. Interacts with TSPYL2. Unlike other protein kinases, does not require a divalent cation such as magnesium for catalytic activity. serves as cofactor. Ubiquitous. Expression is significantly greater in brain relative to kidney, lung, and liver and in fetal brain and kidney relative to lung and liver.

It localises to the nucleus. The protein resides in the cytoplasm. It is found in the cell membrane. It carries out the reaction L-seryl-[protein] + ATP = O-phospho-L-seryl-[protein] + ADP + H(+). The enzyme catalyses L-threonyl-[protein] + ATP = O-phospho-L-threonyl-[protein] + ADP + H(+). With respect to regulation, differs from archetypal CaMK members in that the kinase domain exhibits a constitutively active conformation and the autoinhibitory region does not engage in direct contact with the ATP-binding cleft, although it still binds Ca(2+)/CAM. Functionally, multidomain scaffolding Mg(2+)-independent protein kinase that catalyzes the phosphotransfer from ATP to proteins such as NRXN1, and plays a role in synaptic transmembrane protein anchoring and ion channel trafficking. Contributes to neural development and regulation of gene expression via interaction with the transcription factor TBR1. Binds to cell-surface proteins, including amyloid precursor protein, neurexins and syndecans. May mediate a link between the extracellular matrix and the actin cytoskeleton via its interaction with syndecan and with the actin/spectrin-binding protein 4.1. Component of the LIN-10-LIN-2-LIN-7 complex, which associates with the motor protein KIF17 to transport vesicles containing N-methyl-D-aspartate (NMDA) receptor subunit NR2B along microtubules. The polypeptide is Peripheral plasma membrane protein CASK (Homo sapiens (Human)).